A 1077-amino-acid chain; its full sequence is Carbamoyl phosphate synthase large chain (1077 aa).

Positions 2-403 (PKRTDIKSIL…SLQKALRGLE (402 aa)) are carboxyphosphate synthetic domain. 12 residues coordinate ATP: Arg129, Arg169, Gly175, Gly176, Glu208, Leu210, Glu215, Gly241, Ile242, His243, Gln285, and Glu299. Residues 133 to 328 (DIAMKKIGLD…IAKIAAKLAV (196 aa)) form the ATP-grasp 1 domain. Mg(2+) is bound by residues Gln285, Glu299, and Asn301. Mn(2+)-binding residues include Gln285, Glu299, and Asn301. The tract at residues 404-553 (VGATGFDPKV…YSTYEEECES (150 aa)) is oligomerization domain. The segment at 554-936 (NPTSDRPKVM…AFSKAMLGSQ (383 aa)) is carbamoyl phosphate synthetic domain. In terms of domain architecture, ATP-grasp 2 spans 679-870 (QQAVNRLGLK…LAKIAARVMV (192 aa)). The ATP site is built by Arg715, Arg754, Leu756, Glu761, Gly786, Val787, His788, Ser789, Gln829, and Glu841. Mg(2+) is bound by residues Gln829, Glu841, and Asn843. Residues Gln829, Glu841, and Asn843 each coordinate Mn(2+). Residues 937-1077 (SGMKKSGRAL…MHAKIKNMKA (141 aa)) form the MGS-like domain. Positions 937–1077 (SGMKKSGRAL…MHAKIKNMKA (141 aa)) are allosteric domain.

This sequence belongs to the CarB family. As to quaternary structure, composed of two chains; the small (or glutamine) chain promotes the hydrolysis of glutamine to ammonia, which is used by the large (or ammonia) chain to synthesize carbamoyl phosphate. Tetramer of heterodimers (alpha,beta)4. Mg(2+) is required as a cofactor. Requires Mn(2+) as cofactor.

It catalyses the reaction hydrogencarbonate + L-glutamine + 2 ATP + H2O = carbamoyl phosphate + L-glutamate + 2 ADP + phosphate + 2 H(+). The enzyme catalyses hydrogencarbonate + NH4(+) + 2 ATP = carbamoyl phosphate + 2 ADP + phosphate + 2 H(+). The protein operates within amino-acid biosynthesis; L-arginine biosynthesis; carbamoyl phosphate from bicarbonate: step 1/1. Its pathway is pyrimidine metabolism; UMP biosynthesis via de novo pathway; (S)-dihydroorotate from bicarbonate: step 1/3. Large subunit of the glutamine-dependent carbamoyl phosphate synthetase (CPSase). CPSase catalyzes the formation of carbamoyl phosphate from the ammonia moiety of glutamine, carbonate, and phosphate donated by ATP, constituting the first step of 2 biosynthetic pathways, one leading to arginine and/or urea and the other to pyrimidine nucleotides. The large subunit (synthetase) binds the substrates ammonia (free or transferred from glutamine from the small subunit), hydrogencarbonate and ATP and carries out an ATP-coupled ligase reaction, activating hydrogencarbonate by forming carboxy phosphate which reacts with ammonia to form carbamoyl phosphate. This is Carbamoyl phosphate synthase large chain from Yersinia pestis.